Here is a 246-residue protein sequence, read N- to C-terminus: Aliphatic sulfonates import ATP-binding protein SsuB 2 (246 aa).

In terms of domain architecture, ABC transporter spans 4-218; it reads VTVRGLRRAF…RRDPRFEQAR (215 aa). 36 to 43 contacts ATP; it reads GRSGGGKT.

The protein belongs to the ABC transporter superfamily. Aliphatic sulfonates importer (TC 3.A.1.17.2) family. As to quaternary structure, the complex is composed of two ATP-binding proteins (SsuB), two transmembrane proteins (SsuC) and a solute-binding protein (SsuA).

The protein resides in the cell membrane. The catalysed reaction is ATP + H2O + aliphatic sulfonate-[sulfonate-binding protein]Side 1 = ADP + phosphate + aliphatic sulfonateSide 2 + [sulfonate-binding protein]Side 1.. In terms of biological role, part of the ABC transporter complex SsuABC involved in aliphatic sulfonates import. Responsible for energy coupling to the transport system. In Frankia alni (strain DSM 45986 / CECT 9034 / ACN14a), this protein is Aliphatic sulfonates import ATP-binding protein SsuB 2.